The following is an 876-amino-acid chain: Phosphoenolpyruvate carboxylase (876 aa).

Active-site residues include H138 and K543.

It belongs to the PEPCase type 1 family. It depends on Mg(2+) as a cofactor.

The catalysed reaction is oxaloacetate + phosphate = phosphoenolpyruvate + hydrogencarbonate. In terms of biological role, forms oxaloacetate, a four-carbon dicarboxylic acid source for the tricarboxylic acid cycle. The polypeptide is Phosphoenolpyruvate carboxylase (Aliivibrio salmonicida (strain LFI1238) (Vibrio salmonicida (strain LFI1238))).